The chain runs to 379 residues: Origin of replication complex subunit 2 (379 aa).

The tract at residues 1-25 (MALRGGHAAAAAGVSSGSEDDDEEA) is disordered. The segment covering 8-17 (AAAAAGVSSG) has biased composition (low complexity).

Belongs to the ORC2 family. As to quaternary structure, component of the origin recognition complex (ORC) composed of at least ORC1, ORC2, ORC3, ORC4, ORC5 and ORC6. ORC is regulated in a cell-cycle and development dependent manner. It is sequentially assembled at the exit from anaphase of mitosis and disassembled as cells enter S phase.

Its subcellular location is the nucleus. In terms of biological role, essential protein. Component of the origin recognition complex (ORC) that binds origins of replication. DNA-binding is ATP-dependent, however specific DNA sequences that define origins of replication have not been identified so far. ORC is required to assemble the pre-replication complex necessary to initiate DNA replication. This is Origin of replication complex subunit 2 from Oryza sativa subsp. indica (Rice).